Here is a 353-residue protein sequence, read N- to C-terminus: MSLLTQTINHIGPLDDQAATAARRRQDMLTKPAGSLGRLEELSIRIAGITGRERPRLTKPAVIVMAADHGVARQGVSAFPAEVTPQMVLNFLRGGAAINVLARHVGAQVIVVDIGVAADLPSHPELVSRKLAYGTADFSQEPAMSRDLAQQAIEVGITCANEAIDSGVDLLATGEMGIANTTAASAVVAAITGRPVAEVTGRGTGIDDASLARKIAVIERALVLHQPNPRDGLDVLAKVGGLEIGGLAGVILGAAARRVPVVIDGFISGAAALIAATLAPAAVNYMIAGHRSVERGHAAVFDRLDLKPLLDLDMRLGEGTGAVLAMSLCQAACKVLDEMATFAEAGVSEKKEA.

The Proton acceptor role is filled by glutamate 318.

Belongs to the CobT family.

It carries out the reaction 5,6-dimethylbenzimidazole + nicotinate beta-D-ribonucleotide = alpha-ribazole 5'-phosphate + nicotinate + H(+). The protein operates within nucleoside biosynthesis; alpha-ribazole biosynthesis; alpha-ribazole from 5,6-dimethylbenzimidazole: step 1/2. Catalyzes the synthesis of alpha-ribazole-5'-phosphate from nicotinate mononucleotide (NAMN) and 5,6-dimethylbenzimidazole (DMB). The sequence is that of Nicotinate-nucleotide--dimethylbenzimidazole phosphoribosyltransferase from Chloroflexus aggregans (strain MD-66 / DSM 9485).